A 290-amino-acid polypeptide reads, in one-letter code: 2-phosphoglycerate kinase (290 aa).

The ATP-cone domain occupies 1-89 (MIIVTDSERK…FWRELRRRKV (89 aa)).

It belongs to the 2-phosphoglycerate kinase family. A divalent metal cation is required as a cofactor.

The enzyme catalyses (2R)-2-phosphoglycerate + ATP = (2R)-2,3-bisphosphoglycerate + ADP + H(+). It participates in thermoadapter biosynthesis; cyclic 2,3-diphosphoglycerate biosynthesis; cyclic 2,3-diphosphoglycerate from 2-phospho-D-glycerate: step 1/2. Functionally, catalyzes the phosphorylation of 2-phosphoglycerate to 2,3-diphosphoglycerate. Involved in the biosynthesis of cyclic 2,3-bisphosphoglycerate, a thermoprotectant. This chain is 2-phosphoglycerate kinase, found in Thermococcus kodakarensis (strain ATCC BAA-918 / JCM 12380 / KOD1) (Pyrococcus kodakaraensis (strain KOD1)).